Consider the following 555-residue polypeptide: Intraflagellar transport protein 56 (555 aa).

TPR repeat units lie at residues 57–90 (LKNL…EDPD), 151–184 (IEDQ…HRDY), and 393–426 (DDFN…KYRN).

Belongs to the IFT56 family. Component of the IFT complex B.

It localises to the cell projection. The protein resides in the cilium. The protein localises to the flagellum. In terms of biological role, component of the intraflagellar transport (IFT) complex B required for transport of proteins in the motile cilium. Required for transport of specific ciliary cargo proteins related to motility, while it is neither required for IFT complex B assembly or motion nor for cilium assembly. The polypeptide is Intraflagellar transport protein 56 (Chlamydomonas reinhardtii (Chlamydomonas smithii)).